We begin with the raw amino-acid sequence, 180 residues long: Large ribosomal subunit protein uL5 (180 aa).

This sequence belongs to the universal ribosomal protein uL5 family. In terms of assembly, part of the 50S ribosomal subunit; part of the 5S rRNA/L5/L18/L25 subcomplex. Contacts the 5S rRNA and the P site tRNA. Forms a bridge to the 30S subunit in the 70S ribosome.

Functionally, this is one of the proteins that bind and probably mediate the attachment of the 5S RNA into the large ribosomal subunit, where it forms part of the central protuberance. In the 70S ribosome it contacts protein S13 of the 30S subunit (bridge B1b), connecting the 2 subunits; this bridge is implicated in subunit movement. Contacts the P site tRNA; the 5S rRNA and some of its associated proteins might help stabilize positioning of ribosome-bound tRNAs. This Mycoplasma pneumoniae (strain ATCC 29342 / M129 / Subtype 1) (Mycoplasmoides pneumoniae) protein is Large ribosomal subunit protein uL5.